A 117-amino-acid polypeptide reads, in one-letter code: uncharacterized protein (117 aa).

3 helical membrane passes run 32–52 (VSSSSFVSSSLIFCKCVVTVV), 56–76 (VGVALLGIVGRVVPLYTVTLL), and 87–107 (LSWCSMTNFCELFFYFFSFFF).

The protein resides in the membrane. This is an uncharacterized protein from Saccharomyces cerevisiae (strain ATCC 204508 / S288c) (Baker's yeast).